Reading from the N-terminus, the 408-residue chain is Arylacetamide deacetylase-like 3 (408 aa).

Helical transmembrane passes span 2 to 22 (VVLALTLLVGSVAVFSLGSLL), 46 to 66 (ILSCLFHLTMTWGMIFEKLGL), and 109 to 129 (SSIPRLGIIFFHGGGTIIGSL). The Involved in the stabilization of the negatively charged intermediate by the formation of the oxyanion hole signature appears at 120–122 (HGG). S194 is a catalytic residue. N321 is a glycosylation site (N-linked (GlcNAc...) asparagine). Catalysis depends on residues D348 and H378.

Belongs to the 'GDXG' lipolytic enzyme family.

The protein resides in the membrane. This chain is Arylacetamide deacetylase-like 3 (Aadacl3), found in Mus musculus (Mouse).